Here is a 219-residue protein sequence, read N- to C-terminus: Ras-related protein Rab-3B (219 aa).

The residue at position 2 (A2) is an N-acetylalanine. 9 residues coordinate GTP: S31, S32, V33, G34, K35, T36, S37, P49, and S53. A Mg(2+)-binding site is contributed by T36. The Switch 1 signature appears at 45–58; it reads DTFTPAFVSTVGID. Mg(2+) is bound by residues T54 and D77. Positions 78-96 match the Switch 2 motif; sequence TAGQERYRTITTAYYRGAM. Position 80 (G80) interacts with GTP. The residue at position 86 (T86) is a Phosphothreonine. The GTP site is built by N135, K136, D138, A166, and K167. S188 carries the post-translational modification Phosphoserine. Residues C217 and C219 are each lipidated (S-geranylgeranyl cysteine). C219 is modified (cysteine methyl ester).

The protein belongs to the small GTPase superfamily. Rab family. Interacts with RIMS1, RIMS2, RPH3A and RPH3AL. The GTP-bound form interacts with GAS8/DRC4 (via coiled-coil domains). Interacts with GDI2, CHM and CHML; phosphorylation at Thr-86 disrupts these interactions. Interacts with MADD (via uDENN domain); the GTP-bound form is preferred for interaction. It depends on Mg(2+) as a cofactor. Phosphorylation of Thr-86 in the switch II region by LRRK2 prevents the association of RAB regulatory proteins, including CHM, CHML and RAB GDP dissociation inhibitor GDI2.

Its subcellular location is the cell membrane. The protein localises to the golgi apparatus. The enzyme catalyses GTP + H2O = GDP + phosphate + H(+). With respect to regulation, regulated by guanine nucleotide exchange factors (GEFs) which promote the exchange of bound GDP for free GTP. Regulated by GTPase activating proteins (GAPs) which increase the GTP hydrolysis activity. Inhibited by GDP dissociation inhibitors (GDIs) which prevent Rab-GDP dissociation. Its function is as follows. The small GTPases Rab are key regulators of intracellular membrane trafficking, from the formation of transport vesicles to their fusion with membranes. Rabs cycle between an inactive GDP-bound form and an active GTP-bound form that is able to recruit to membranes different sets of downstream effectors directly responsible for vesicle formation, movement, tethering and fusion. In Bos taurus (Bovine), this protein is Ras-related protein Rab-3B (RAB3B).